Consider the following 345-residue polypeptide: N-acetyl-gamma-glutamyl-phosphate reductase (345 aa).

Residue C149 is part of the active site.

Belongs to the NAGSA dehydrogenase family. Type 1 subfamily.

It is found in the cytoplasm. The catalysed reaction is N-acetyl-L-glutamate 5-semialdehyde + phosphate + NADP(+) = N-acetyl-L-glutamyl 5-phosphate + NADPH + H(+). The protein operates within amino-acid biosynthesis; L-arginine biosynthesis; N(2)-acetyl-L-ornithine from L-glutamate: step 3/4. Catalyzes the NADPH-dependent reduction of N-acetyl-5-glutamyl phosphate to yield N-acetyl-L-glutamate 5-semialdehyde. The polypeptide is N-acetyl-gamma-glutamyl-phosphate reductase (Bacillus thuringiensis subsp. konkukian (strain 97-27)).